A 341-amino-acid polypeptide reads, in one-letter code: Tetraacyldisaccharide 4'-kinase (341 aa).

54–61 lines the ATP pocket; the sequence is TVGGTGKT.

This sequence belongs to the LpxK family.

The catalysed reaction is a lipid A disaccharide + ATP = a lipid IVA + ADP + H(+). The protein operates within glycolipid biosynthesis; lipid IV(A) biosynthesis; lipid IV(A) from (3R)-3-hydroxytetradecanoyl-[acyl-carrier-protein] and UDP-N-acetyl-alpha-D-glucosamine: step 6/6. Functionally, transfers the gamma-phosphate of ATP to the 4'-position of a tetraacyldisaccharide 1-phosphate intermediate (termed DS-1-P) to form tetraacyldisaccharide 1,4'-bis-phosphate (lipid IVA). The sequence is that of Tetraacyldisaccharide 4'-kinase from Mesorhizobium japonicum (strain LMG 29417 / CECT 9101 / MAFF 303099) (Mesorhizobium loti (strain MAFF 303099)).